A 177-amino-acid chain; its full sequence is SKP1-like protein 15 (177 aa).

The interval 108–167 is interaction with the F-box domain of F-box proteins; it reads ILAANYLNVEGLLGLTCQTVADYIKDKTPEEVRELFNIENDFTHEEEEEAIRKENAWAFE.

It belongs to the SKP1 family. In terms of assembly, part of a SCF (SKP1-cullin-F-box) protein ligase complex. As to expression, expressed at low levels in seedlings and leaves.

It is found in the nucleus. It functions in the pathway protein modification; protein ubiquitination. Its function is as follows. Involved in ubiquitination and subsequent proteasomal degradation of target proteins. Together with CUL1, RBX1 and a F-box protein, it forms a SCF E3 ubiquitin ligase complex. The functional specificity of this complex depends on the type of F-box protein. In the SCF complex, it serves as an adapter that links the F-box protein to CUL1. The sequence is that of SKP1-like protein 15 (ASK15) from Arabidopsis thaliana (Mouse-ear cress).